The chain runs to 484 residues: Carbohydrate sulfotransferase 7 (484 aa).

Residues 1–12 (MKGRRRRRREYC) lie on the Cytoplasmic side of the membrane. Residues 13-33 (KFTLLLALYTLLLLLVPSVLD) form a helical; Signal-anchor for type II membrane protein membrane-spanning segment. Topologically, residues 34-484 (SHSEQDKGRN…PLETKANWAV (451 aa)) are lumenal. The segment at 71–90 (RSLAEGNPDRSPGSPGNLSA) is disordered. Residue N87 is glycosylated (N-linked (GlcNAc...) asparagine). 108 to 114 (WRTGSSF) contacts 3'-phosphoadenylyl sulfate. N184 is a glycosylation site (N-linked (GlcNAc...) asparagine). 276–284 (RDPRAVHNS) provides a ligand contact to 3'-phosphoadenylyl sulfate. N-linked (GlcNAc...) asparagine glycosylation occurs at N405. S460 bears the Phosphoserine mark. Positions 460–473 (SGDERDRKTVREGE) are enriched in basic and acidic residues. Residues 460–484 (SGDERDRKTVREGETPLETKANWAV) form a disordered region.

Belongs to the sulfotransferase 1 family. Gal/GlcNAc/GalNAc subfamily. As to expression, widely expressed. Highly expressed in kidney. Expressed at lower level in heart, lung and liver.

It is found in the golgi apparatus membrane. The enzyme catalyses chondroitin beta-D-glucuronate + n 3'-phosphoadenylyl sulfate = chondroitin 6'-sulfate + n adenosine 3',5'-bisphosphate + n H(+). Its function is as follows. Sulfotransferase that utilizes 3'-phospho-5'-adenylyl sulfate (PAPS) as sulfonate donor to catalyze the transfer of sulfate to position 6 of non-reducing N-acetylglucosamine (GlcNAc) residues. Preferentially acts on mannose-linked GlcNAc. Also able to catalyze the transfer of sulfate to position 6 of the N-acetylgalactosamine (GalNAc) residue of chondroitin. Also acts on core 2 mucin-type oligosaccharide and N-acetyllactosamine oligomer with a lower efficiency. Has weak or no activity toward keratan sulfate and oligosaccharides containing the Galbeta1-4GlcNAc. Catalyzes 6-O-sulfation of beta-benzyl GlcNAc but not alpha- or beta-benzyl GalNAc. The sequence is that of Carbohydrate sulfotransferase 7 (Chst7) from Mus musculus (Mouse).